Here is a 311-residue protein sequence, read N- to C-terminus: Retinol dehydrogenase 8 (311 aa).

An NADP(+)-binding site is contributed by 9-18 (LISGCSSGIG). A run of 3 helical transmembrane segments spans residues 86–106 (VLVN…SLAA), 137–157 (IVVI…VYAA), and 169–189 (LAIQ…GPVV). S142 contacts substrate. Y155 acts as the Proton acceptor in catalysis.

It belongs to the short-chain dehydrogenases/reductases (SDR) family. As to expression, detected in photoreceptor outer segments in the retina (at protein level).

The protein localises to the membrane. It catalyses the reaction all-trans-retinol + NADP(+) = all-trans-retinal + NADPH + H(+). Retinol dehydrogenase with a clear preference for NADP. Converts all-trans-retinal to all-trans-retinol. May play a role in the regeneration of visual pigment at high light intensity. In Homo sapiens (Human), this protein is Retinol dehydrogenase 8 (RDH8).